The chain runs to 513 residues: Protein phosphatase 1H (513 aa).

Residue serine 7 is modified to Phosphoserine. The PPM-type phosphatase domain occupies 77-506; sequence ATGYAEVINA…DDISVYVIPL (430 aa). Positions 109–133 are disordered; the sequence is TITSTPNRNSKRRSSLPNGEGLQLK. Threonine 113 is modified (phosphothreonine). Phosphoserine occurs at positions 123 and 210. Arginine 212 carries the omega-N-methylarginine modification. The residue at position 220 (serine 220) is a Phosphoserine. Threonine 223 is modified (phosphothreonine). The residue at position 421 (serine 421) is a Phosphoserine.

Belongs to the PP2C family.

It is found in the nucleus. The protein resides in the cytoplasm. The enzyme catalyses O-phospho-L-seryl-[protein] + H2O = L-seryl-[protein] + phosphate. The catalysed reaction is O-phospho-L-threonyl-[protein] + H2O = L-threonyl-[protein] + phosphate. Dephosphorylates CDKN1B at 'Thr-187', thus removing a signal for proteasomal degradation. In Mus musculus (Mouse), this protein is Protein phosphatase 1H (Ppm1h).